A 927-amino-acid polypeptide reads, in one-letter code: Isoleucine--tRNA ligase (927 aa).

A 'HIGH' region motif is present at residues 57-67; it reads PYANGHIHIGH. Glutamate 561 serves as a coordination point for L-isoleucyl-5'-AMP. A 'KMSKS' region motif is present at residues 602–606; it reads KMSKS. Lysine 605 contacts ATP. Positions 897, 900, 917, and 920 each coordinate Zn(2+).

The protein belongs to the class-I aminoacyl-tRNA synthetase family. IleS type 1 subfamily. Monomer. It depends on Zn(2+) as a cofactor.

The protein localises to the cytoplasm. It carries out the reaction tRNA(Ile) + L-isoleucine + ATP = L-isoleucyl-tRNA(Ile) + AMP + diphosphate. Functionally, catalyzes the attachment of isoleucine to tRNA(Ile). As IleRS can inadvertently accommodate and process structurally similar amino acids such as valine, to avoid such errors it has two additional distinct tRNA(Ile)-dependent editing activities. One activity is designated as 'pretransfer' editing and involves the hydrolysis of activated Val-AMP. The other activity is designated 'posttransfer' editing and involves deacylation of mischarged Val-tRNA(Ile). This chain is Isoleucine--tRNA ligase, found in Syntrophotalea carbinolica (strain DSM 2380 / NBRC 103641 / GraBd1) (Pelobacter carbinolicus).